The following is a 448-amino-acid chain: Divalent metal cation transporter MntH (448 aa).

The segment covering 1-10 has biased composition (basic and acidic residues); that stretch reads MKKDKTERTK. The segment at 1 to 20 is disordered; sequence MKKDKTERTKQSWRKAQNAP. Transmembrane regions (helical) follow at residues 41–61, 69–89, 117–137, 147–167, 176–196, 215–235, 270–290, 307–327, 363–383, 384–404, and 424–444; these read LFAF…PGNW, SEFG…AVLL, GFVL…AEVI, FGIP…LVLF, IEVI…AEMV, IVTN…TVMP, FSLT…AAAF, LLNP…ALLA, VLAI…GINE, LLIF…IPLV, and IISW…LFYT.

Belongs to the NRAMP family.

It localises to the cell membrane. Its function is as follows. H(+)-stimulated, divalent metal cation uptake system. The polypeptide is Divalent metal cation transporter MntH (Listeria monocytogenes serotype 4b (strain CLIP80459)).